A 138-amino-acid chain; its full sequence is Small ribosomal subunit protein uS9 (138 aa).

Over residues 100–118 (PENRPPLKTEGYLTRDPRA) the composition is skewed to basic and acidic residues. The interval 100–138 (PENRPPLKTEGYLTRDPRAKERKKYGLHKARKAPQYSKR) is disordered. Over residues 119 to 138 (KERKKYGLHKARKAPQYSKR) the composition is skewed to basic residues.

This sequence belongs to the universal ribosomal protein uS9 family.

This Trichormus variabilis (strain ATCC 29413 / PCC 7937) (Anabaena variabilis) protein is Small ribosomal subunit protein uS9.